Consider the following 442-residue polypeptide: Putative ammonium transporter sll1017 (442 aa).

13 consecutive transmembrane segments (helical) span residues 5-25, 44-64, 81-101, 104-124, 133-153, 155-175, 193-213, 240-260, 269-289, 299-319, 325-345, 354-374, and 386-406; these read NFPL…VGVA, LFLL…AMLE, TFDV…LMYG, PVLG…LDNV, WLFQ…AVMG, MYFK…YPIS, FAGS…AVVV, GVFI…LAFV, MLIA…ALAF, PNLL…TAGC, WSAI…TKLL, VGAW…VGIF, and IVGS…LFYV.

It belongs to the ammonia transporter channel (TC 1.A.11.2) family.

The protein resides in the cell membrane. The protein is Putative ammonium transporter sll1017 of Synechocystis sp. (strain ATCC 27184 / PCC 6803 / Kazusa).